The sequence spans 129 residues: Probable cytochrome b5 2 (129 aa).

The Cytochrome b5 heme-binding domain occupies 3-79 (EKTITVEEVL…LEKFYIGNLL (77 aa)). Heme is bound by residues H38 and H62. Residues 105–125 (VKPAMWLFVLVMVVAYFAFRK) traverse the membrane as a helical segment.

It belongs to the cytochrome b5 family.

The protein localises to the endoplasmic reticulum membrane. Its subcellular location is the microsome membrane. It is found in the mitochondrion. Membrane bound hemoprotein which function as an electron carrier for several membrane bound oxygenases. This is Probable cytochrome b5 2 (oca8) from Schizosaccharomyces pombe (strain 972 / ATCC 24843) (Fission yeast).